Here is a 272-residue protein sequence, read N- to C-terminus: Putative MgpC-like protein MPN_366 (272 aa).

Disordered stretches follow at residues Gln-65–Ser-84 and Gly-171–Ser-196. A compositionally biased stretch (low complexity) spans Asn-72–Ser-84. Positions Gly-173–Leu-187 are enriched in polar residues.

The protein belongs to the MgpC family.

The sequence is that of Putative MgpC-like protein MPN_366 from Mycoplasma pneumoniae (strain ATCC 29342 / M129 / Subtype 1) (Mycoplasmoides pneumoniae).